The sequence spans 360 residues: UPF0284 protein APE_2029.1 (360 aa).

It belongs to the UPF0284 family.

This is UPF0284 protein APE_2029.1 from Aeropyrum pernix (strain ATCC 700893 / DSM 11879 / JCM 9820 / NBRC 100138 / K1).